The primary structure comprises 227 residues: Large ribosomal subunit protein bL25 (227 aa).

Residues 1 to 22 form a disordered region; the sequence is MAETKTLAAAARHGTGKGAARS.

The protein belongs to the bacterial ribosomal protein bL25 family. CTC subfamily. Part of the 50S ribosomal subunit; part of the 5S rRNA/L5/L18/L25 subcomplex. Contacts the 5S rRNA. Binds to the 5S rRNA independently of L5 and L18.

In terms of biological role, this is one of the proteins that binds to the 5S RNA in the ribosome where it forms part of the central protuberance. This chain is Large ribosomal subunit protein bL25, found in Methylocella silvestris (strain DSM 15510 / CIP 108128 / LMG 27833 / NCIMB 13906 / BL2).